Consider the following 161-residue polypeptide: Protein-export protein SecB (161 aa).

The segment at 141 to 161 is disordered; that stretch reads KKQQETAGEQPDQPADTITRH.

This sequence belongs to the SecB family. In terms of assembly, homotetramer, a dimer of dimers. One homotetramer interacts with 1 SecA dimer.

Its subcellular location is the cytoplasm. In terms of biological role, one of the proteins required for the normal export of preproteins out of the cell cytoplasm. It is a molecular chaperone that binds to a subset of precursor proteins, maintaining them in a translocation-competent state. It also specifically binds to its receptor SecA. This is Protein-export protein SecB from Nitrosomonas europaea (strain ATCC 19718 / CIP 103999 / KCTC 2705 / NBRC 14298).